The chain runs to 501 residues: ATP synthase subunit alpha (501 aa).

169-176 (GDRQTGKT) lines the ATP pocket.

The protein belongs to the ATPase alpha/beta chains family. In terms of assembly, F-type ATPases have 2 components, CF(1) - the catalytic core - and CF(0) - the membrane proton channel. CF(1) has five subunits: alpha(3), beta(3), gamma(1), delta(1), epsilon(1). CF(0) has three main subunits: a(1), b(2) and c(9-12). The alpha and beta chains form an alternating ring which encloses part of the gamma chain. CF(1) is attached to CF(0) by a central stalk formed by the gamma and epsilon chains, while a peripheral stalk is formed by the delta and b chains.

Its subcellular location is the cell membrane. It catalyses the reaction ATP + H2O + 4 H(+)(in) = ADP + phosphate + 5 H(+)(out). In terms of biological role, produces ATP from ADP in the presence of a proton gradient across the membrane. The alpha chain is a regulatory subunit. The chain is ATP synthase subunit alpha from Streptococcus uberis (strain ATCC BAA-854 / 0140J).